We begin with the raw amino-acid sequence, 418 residues long: UDP-N-acetylglucosamine 1-carboxyvinyltransferase (418 aa).

Residue 22 to 23 (KN) coordinates phosphoenolpyruvate. Arg-92 lines the UDP-N-acetyl-alpha-D-glucosamine pocket. Cys-116 acts as the Proton donor in catalysis. The residue at position 116 (Cys-116) is a 2-(S-cysteinyl)pyruvic acid O-phosphothioketal. Asp-305 and Ile-327 together coordinate UDP-N-acetyl-alpha-D-glucosamine.

The protein belongs to the EPSP synthase family. MurA subfamily.

It localises to the cytoplasm. It catalyses the reaction phosphoenolpyruvate + UDP-N-acetyl-alpha-D-glucosamine = UDP-N-acetyl-3-O-(1-carboxyvinyl)-alpha-D-glucosamine + phosphate. It functions in the pathway cell wall biogenesis; peptidoglycan biosynthesis. Its function is as follows. Cell wall formation. Adds enolpyruvyl to UDP-N-acetylglucosamine. The sequence is that of UDP-N-acetylglucosamine 1-carboxyvinyltransferase from Gluconobacter oxydans (strain 621H) (Gluconobacter suboxydans).